Consider the following 463-residue polypeptide: Peptidylprolyl isomerase cyp7 (463 aa).

One can recognise a PPIase cyclophilin-type domain in the interval 11-166 (ATGTVILKTT…FPPKIISTEV (156 aa)). The interval 224–275 (VKKPLRQKTPVSRSSDTTTELSKDLISSSSSIHSTYSSAQTGLTSAKVSSDE) is disordered. The segment covering 232 to 243 (TPVSRSSDTTTE) has biased composition (polar residues). Residues 250-261 (SSSSSIHSTYSS) show a composition bias toward low complexity. Residues 262–271 (AQTGLTSAKV) are compositionally biased toward polar residues.

The protein belongs to the cyclophilin-type PPIase family. CWC27 subfamily. Belongs to the 40S cdc5-associated complex (or cwf complex), a spliceosome sub-complex reminiscent of a late-stage spliceosome composed of the U2, U5 and U6 snRNAs and at least brr2, cdc5, cwf2/prp3, cwf3/syf1, cwf4/syf3, cwf5/ecm2, spp42/cwf6, cwf7/spf27, cwf8, cwf9, cwf10, cwf11, cwf12, prp45/cwf13, cwf14, cwf15, cwf16, cwf17, cwf18, cwf19, cwf20, cwf21, cwf22, cwf23, cwf24, cwf25, cwf26, cyp7/cwf27, cwf28, cwf29/ist3, lea1, msl1, prp5/cwf1, prp10, prp12/sap130, prp17, prp22, sap61, sap62, sap114, sap145, slu7, smb1, smd1, smd3, smf1, smg1 and syf2.

It is found in the cytoplasm. Its subcellular location is the nucleus. It catalyses the reaction [protein]-peptidylproline (omega=180) = [protein]-peptidylproline (omega=0). Functionally, PPIases accelerate the folding of proteins. Catalyzes the cis-trans isomerization of proline imidic peptide bonds in oligopeptides. Involved in pre-mRNA splicing. The polypeptide is Peptidylprolyl isomerase cyp7 (cyp7) (Schizosaccharomyces pombe (strain 972 / ATCC 24843) (Fission yeast)).